The sequence spans 549 residues: Cation/acetate symporter ActP (549 aa).

13 consecutive transmembrane segments (helical) span residues tryptophan 33 to alanine 53, leucine 77 to phenylalanine 97, glycine 103 to glutamate 123, isoleucine 148 to glycine 168, isoleucine 183 to alanine 203, tryptophan 206 to valine 226, isoleucine 262 to leucine 282, glycine 303 to valine 323, leucine 355 to leucine 375, valine 404 to glutamate 424, isoleucine 428 to leucine 448, glycine 464 to valine 484, and isoleucine 493 to phenylalanine 513.

The protein belongs to the sodium:solute symporter (SSF) (TC 2.A.21) family.

It localises to the cell inner membrane. Transports acetate. The sequence is that of Cation/acetate symporter ActP from Salmonella newport (strain SL254).